The following is a 693-amino-acid chain: Elongation factor G (693 aa).

Residues 8–282 (EKTRNIGIMA…AVIDYLPSPL (275 aa)) enclose the tr-type G domain. GTP contacts are provided by residues 17–24 (AHIDAGKT), 81–85 (DTPGH), and 135–138 (NKMD).

It belongs to the TRAFAC class translation factor GTPase superfamily. Classic translation factor GTPase family. EF-G/EF-2 subfamily.

It localises to the cytoplasm. In terms of biological role, catalyzes the GTP-dependent ribosomal translocation step during translation elongation. During this step, the ribosome changes from the pre-translocational (PRE) to the post-translocational (POST) state as the newly formed A-site-bound peptidyl-tRNA and P-site-bound deacylated tRNA move to the P and E sites, respectively. Catalyzes the coordinated movement of the two tRNA molecules, the mRNA and conformational changes in the ribosome. The protein is Elongation factor G of Staphylococcus aureus (strain Mu3 / ATCC 700698).